We begin with the raw amino-acid sequence, 247 residues long: UPF0309 protein Lm4b_02611 (247 aa).

One can recognise an SIS domain in the interval 31–214; that stretch reads VAESIENDGV…ETMVNDNFTP (184 aa).

It belongs to the UPF0309 family.

The polypeptide is UPF0309 protein Lm4b_02611 (Listeria monocytogenes serotype 4b (strain CLIP80459)).